The primary structure comprises 554 residues: Probable oligo-1,6-glucosidase 3 (554 aa).

Residue Asp-199 is the Nucleophile of the active site. Catalysis depends on Glu-256, which acts as the Proton donor.

The protein belongs to the glycosyl hydrolase 13 family.

Its subcellular location is the cytoplasm. The enzyme catalyses Hydrolysis of (1-&gt;6)-alpha-D-glucosidic linkages in some oligosaccharides produced from starch and glycogen by alpha-amylase, and in isomaltose.. The sequence is that of Probable oligo-1,6-glucosidase 3 (yugT) from Bacillus subtilis (strain 168).